A 199-amino-acid chain; its full sequence is Recombination protein RecR (199 aa).

Residues 58-73 (CLNCGNIGTSDICDIC) form a C4-type zinc finger. Residues 81-176 (GEICVVEDVA…AVTSLAQGVP (96 aa)) enclose the Toprim domain.

Belongs to the RecR family.

In terms of biological role, may play a role in DNA repair. It seems to be involved in an RecBC-independent recombinational process of DNA repair. It may act with RecF and RecO. The chain is Recombination protein RecR from Dinoroseobacter shibae (strain DSM 16493 / NCIMB 14021 / DFL 12).